Reading from the N-terminus, the 110-residue chain is Insulin (110 aa).

The N-terminal stretch at 1-24 is a signal peptide; the sequence is MALWMRLLPLLAFLILWEPSPAHA. 3 disulfide bridges follow: C31–C96, C43–C109, and C95–C100. Residues 57-87 constitute a propeptide, c peptide; the sequence is GVDDPQMPQLELGGSPGAGDLRALALEVARQ.

This sequence belongs to the insulin family. In terms of assembly, heterodimer of a B chain and an A chain linked by two disulfide bonds.

The protein localises to the secreted. Insulin decreases blood glucose concentration. It increases cell permeability to monosaccharides, amino acids and fatty acids. It accelerates glycolysis, the pentose phosphate cycle, and glycogen synthesis in liver. This is Insulin (INS) from Psammomys obesus (Fat sand rat).